Consider the following 292-residue polypeptide: Diaminopimelate epimerase (292 aa).

Asn14 and Asn81 together coordinate substrate. Cys90 (proton donor) is an active-site residue. Substrate-binding positions include 91-92, Asn166, Asn202, and 220-221; these read GN and ER. Cys229 acts as the Proton acceptor in catalysis. Residue 230-231 coordinates substrate; that stretch reads GT.

This sequence belongs to the diaminopimelate epimerase family. In terms of assembly, homodimer.

The protein localises to the cytoplasm. It catalyses the reaction (2S,6S)-2,6-diaminopimelate = meso-2,6-diaminopimelate. It functions in the pathway amino-acid biosynthesis; L-lysine biosynthesis via DAP pathway; DL-2,6-diaminopimelate from LL-2,6-diaminopimelate: step 1/1. Catalyzes the stereoinversion of LL-2,6-diaminopimelate (L,L-DAP) to meso-diaminopimelate (meso-DAP), a precursor of L-lysine and an essential component of the bacterial peptidoglycan. The chain is Diaminopimelate epimerase from Rhodococcus erythropolis (strain PR4 / NBRC 100887).